We begin with the raw amino-acid sequence, 591 residues long: V-type ATP synthase alpha chain (591 aa).

233–240 (GPFGAGKT) is an ATP binding site.

It belongs to the ATPase alpha/beta chains family.

The catalysed reaction is ATP + H2O + 4 H(+)(in) = ADP + phosphate + 5 H(+)(out). Functionally, produces ATP from ADP in the presence of a proton gradient across the membrane. The V-type alpha chain is a catalytic subunit. The protein is V-type ATP synthase alpha chain of Streptococcus pneumoniae (strain ATCC 700669 / Spain 23F-1).